Here is a 122-residue protein sequence, read N- to C-terminus: MKNRKFSNLLLLRLRILCFNKKPAFAATSYAFFFRNFSVLIFIMVPDEKENGAAADNSFSLLIGRGVVLFLFYCPTALKMHGPVPAHWFCDKNIEAIQSDGQIRLLRSGPFPWSHGTCIRGA.

Residues 1-24 (MKNRKFSNLLLLRLRILCFNKKPA) lie on the Cytoplasmic side of the membrane. Residues 25 to 45 (FAATSYAFFFRNFSVLIFIMV) traverse the membrane as a helical segment. Residues 46-57 (PDEKENGAAADN) lie on the Extracellular side of the membrane. A helical membrane pass occupies residues 58–78 (SFSLLIGRGVVLFLFYCPTAL). At 79–122 (KMHGPVPAHWFCDKNIEAIQSDGQIRLLRSGPFPWSHGTCIRGA) the chain is on the cytoplasmic side.

Its subcellular location is the membrane. This is an uncharacterized protein from Saccharomyces cerevisiae (strain ATCC 204508 / S288c) (Baker's yeast).